We begin with the raw amino-acid sequence, 446 residues long: NADH oxidase (446 aa).

FAD-binding positions include 7–11 (GCTHA), E32, C42, V79, 110–113 (TTGS), K132, and Y157. H10 (proton acceptor) is an active-site residue. Residue C42 is the Redox-active of the active site. Residue C42 is modified to Cysteine sulfinic acid (-SO2H). Residues 150-165 (VVVVGGGYIGIELVEA), D177, Y186, and G243 each bind NAD(+). FAD is bound by residues 271-281 (TSNPDIFAAGD), L298, A299, and T300. G328 is a binding site for NAD(+). F424 lines the FAD pocket.

It belongs to the class-III pyridine nucleotide-disulfide oxidoreductase family. As to quaternary structure, homodimer. FAD is required as a cofactor. Post-translationally, the N-terminus is blocked.

It catalyses the reaction 2 NADH + O2 + 2 H(+) = 2 NAD(+) + 2 H2O. In terms of biological role, catalyzes the four-electron reduction of molecular oxygen to water. The chain is NADH oxidase (nox) from Enterococcus faecalis (strain ATCC 700802 / V583).